Consider the following 142-residue polypeptide: Neuritin (142 aa).

A signal peptide spans methionine 1 to alanine 27. Glycine 116 carries GPI-anchor amidated glycine lipidation. A propeptide spans alanine 117 to phenylalanine 142 (removed in mature form).

This sequence belongs to the neuritin family. In terms of assembly, component of the outer core of AMPAR complex. AMPAR complex consists of an inner core made of 4 pore-forming GluA/GRIA proteins (GRIA1, GRIA2, GRIA3 and GRIA4) and 4 major auxiliary subunits arranged in a twofold symmetry. One of the two pairs of distinct binding sites is occupied either by CNIH2, CNIH3 or CACNG2, CACNG3. The other harbors CACNG2, CACNG3, CACNG4, CACNG8 or GSG1L. This inner core of AMPAR complex is complemented by outer core constituents binding directly to the GluA/GRIA proteins at sites distinct from the interaction sites of the inner core constituents. Outer core constituents include at least PRRT1, PRRT2, CKAMP44/SHISA9, FRRS1L and NRN1. The proteins of the inner and outer core serve as a platform for other, more peripherally associated AMPAR constituents. Alone or in combination, these auxiliary subunits control the gating and pharmacology of the AMPAR complex and profoundly impact their biogenesis and protein processing.

It is found in the cell membrane. The protein localises to the synapse. Promotes neurite outgrowth and especially branching of neuritic processes in primary hippocampal and cortical cells. This is Neuritin (NRN1) from Bos taurus (Bovine).